The chain runs to 200 residues: Recombination protein RecR (200 aa).

The C4-type zinc-finger motif lies at Cys-57–Cys-72. In terms of domain architecture, Toprim spans Gly-80–Pro-175.

Belongs to the RecR family.

Its function is as follows. May play a role in DNA repair. It seems to be involved in an RecBC-independent recombinational process of DNA repair. It may act with RecF and RecO. In Marinobacter nauticus (strain ATCC 700491 / DSM 11845 / VT8) (Marinobacter aquaeolei), this protein is Recombination protein RecR.